The following is a 57-amino-acid chain: Small hydrophobic protein (57 aa).

The Virion surface segment spans residues 1–8 (MPAIQPLL). A helical membrane pass occupies residues 9-29 (YLTFLLLILLYLIITLYVWVV). Residues 30–57 (STITYKTAVRHAALYQRSLFRWSLDHSL) lie on the Intravirion side of the membrane.

It belongs to the rubulavirus small hydrophobic protein family. Interacts with host TNFRSF1A, RIPK1 and IRAK1; these interactions interfere with host NF-kappa-B activation at the level of receptor complexes. Interacts with host protein UBQLN4.

The protein resides in the virion membrane. The protein localises to the host cell membrane. Plays a role in the inhibition of the host NF-kappa-B pathway. This inhibition occurs at the receptor level, by preventing the signaling of TNFR1 as well as IL-1R and TLR3. This Homo sapiens (Human) protein is Small hydrophobic protein (SH).